A 179-amino-acid polypeptide reads, in one-letter code: Hypoxanthine-guanine phosphoribosyltransferase (179 aa).

2 residues coordinate diphosphate: Lys42 and Gly43. 2 residues coordinate Mg(2+): Glu98 and Asp99. Glu102 serves as the catalytic Proton acceptor. GMP-binding positions include Lys130, 151–152, and Asp158; that span reads FV. Diphosphate is bound at residue Arg164.

Belongs to the purine/pyrimidine phosphoribosyltransferase family. Mg(2+) is required as a cofactor.

The protein localises to the cytoplasm. The catalysed reaction is IMP + diphosphate = hypoxanthine + 5-phospho-alpha-D-ribose 1-diphosphate. The enzyme catalyses GMP + diphosphate = guanine + 5-phospho-alpha-D-ribose 1-diphosphate. It functions in the pathway purine metabolism; IMP biosynthesis via salvage pathway; IMP from hypoxanthine: step 1/1. Its pathway is purine metabolism; GMP biosynthesis via salvage pathway; GMP from guanine: step 1/1. In terms of biological role, purine salvage pathway enzyme that catalyzes the transfer of the ribosyl-5-phosphate group from 5-phospho-alpha-D-ribose 1-diphosphate (PRPP) to the N9 position of the 6-oxopurines hypoxanthine and guanine to form the corresponding ribonucleotides IMP (inosine 5'-monophosphate) and GMP (guanosine 5'-monophosphate), with the release of PPi. The protein is Hypoxanthine-guanine phosphoribosyltransferase (hpt) of Staphylococcus aureus (strain COL).